The primary structure comprises 404 residues: NADH-quinone oxidoreductase subunit D (404 aa).

The protein belongs to the complex I 49 kDa subunit family. NDH-1 is composed of 14 different subunits. Subunits NuoB, C, D, E, F, and G constitute the peripheral sector of the complex.

The protein localises to the cell inner membrane. The catalysed reaction is a quinone + NADH + 5 H(+)(in) = a quinol + NAD(+) + 4 H(+)(out). Functionally, NDH-1 shuttles electrons from NADH, via FMN and iron-sulfur (Fe-S) centers, to quinones in the respiratory chain. The immediate electron acceptor for the enzyme in this species is believed to be ubiquinone. Couples the redox reaction to proton translocation (for every two electrons transferred, four hydrogen ions are translocated across the cytoplasmic membrane), and thus conserves the redox energy in a proton gradient. This is NADH-quinone oxidoreductase subunit D from Leptospira borgpetersenii serovar Hardjo-bovis (strain JB197).